The chain runs to 140 residues: uncharacterized protein (140 aa).

The 139-residue stretch at 2 to 140 (KAVIAKNEEQ…GIPHLQMMKD (139 aa)) folds into the N-acetyltransferase domain.

Belongs to the acetyltransferase family.

This is an uncharacterized protein from Bacillus subtilis (strain 168).